A 459-amino-acid chain; its full sequence is Type IV methyl-directed restriction enzyme EcoKMcrB subunit (459 aa).

GTP contacts are provided by residues 201–208 (GPPGVGKT), 300–303 (DKRG), and 333–336 (NTAD).

In terms of biological role, recognizes N4- and C5-methylcytosine (and 5-hydroxy-methylcytosines) produced by a broad range of DNA methylases and appears to act against 5-methylcytosine preceded by a purine residue. Binds to DNA containing methylated cytosines; also binds to GTP. Isoform 33 kDa is less active than isoform 51 kDa and may play a role in regulating the activity of isoform 51 kDa by competing with it in DNA and protein binding abilities. In Escherichia coli (strain K12), this protein is Type IV methyl-directed restriction enzyme EcoKMcrB subunit (mcrB).